The primary structure comprises 396 residues: Phospholipase A1-II 4 (396 aa).

The active-site Acyl-ester intermediate is Ser221. Active-site charge relay system residues include Ser221, Asp282, and His319.

Belongs to the AB hydrolase superfamily. Lipase family.

The protein localises to the cytoplasm. Acylhydrolase that catalyzes the hydrolysis of phospholipids at the sn-1 position. This Oryza sativa subsp. japonica (Rice) protein is Phospholipase A1-II 4.